A 486-amino-acid chain; its full sequence is Membrane-bound lytic murein transglycosylase F (486 aa).

Residues 1–21 form the signal peptide; it reads MTRIKLSYFTIGLVALLLALA. A non-LT domain region spans residues 22-268; that stretch reads LWPNIPWRNG…RLEEKYLGHV (247 aa). Residues 269–486 form an LT domain region; sequence GSFDYVDTKT…VVGPGWSIGD (218 aa). Residue glutamate 313 is part of the active site.

In the N-terminal section; belongs to the bacterial solute-binding protein 3 family. It in the C-terminal section; belongs to the transglycosylase Slt family.

The protein resides in the cell outer membrane. It carries out the reaction Exolytic cleavage of the (1-&gt;4)-beta-glycosidic linkage between N-acetylmuramic acid (MurNAc) and N-acetylglucosamine (GlcNAc) residues in peptidoglycan, from either the reducing or the non-reducing ends of the peptidoglycan chains, with concomitant formation of a 1,6-anhydrobond in the MurNAc residue.. In terms of biological role, murein-degrading enzyme that degrades murein glycan strands and insoluble, high-molecular weight murein sacculi, with the concomitant formation of a 1,6-anhydromuramoyl product. Lytic transglycosylases (LTs) play an integral role in the metabolism of the peptidoglycan (PG) sacculus. Their lytic action creates space within the PG sacculus to allow for its expansion as well as for the insertion of various structures such as secretion systems and flagella. This is Membrane-bound lytic murein transglycosylase F from Yersinia pestis bv. Antiqua (strain Antiqua).